We begin with the raw amino-acid sequence, 427 residues long: Peptidase B (427 aa).

Mn(2+) contacts are provided by Lys-195 and Asp-200. The active site involves Lys-207. Mn(2+) is bound by residues Asp-218, Asp-277, and Glu-279. Arg-281 is a catalytic residue.

It belongs to the peptidase M17 family. Homohexamer. Mn(2+) serves as cofactor.

It is found in the cytoplasm. The catalysed reaction is Release of an N-terminal amino acid, Xaa, from a peptide or arylamide. Xaa is preferably Glu or Asp but may be other amino acids, including Leu, Met, His, Cys and Gln.. Functionally, probably plays an important role in intracellular peptide degradation. This chain is Peptidase B, found in Escherichia coli (strain ATCC 8739 / DSM 1576 / NBRC 3972 / NCIMB 8545 / WDCM 00012 / Crooks).